The primary structure comprises 451 residues: Acetylornithine aminotransferase, mitochondrial (451 aa).

Lysine 302 is modified (N6-(pyridoxal phosphate)lysine).

Belongs to the class-III pyridoxal-phosphate-dependent aminotransferase family. Pyridoxal 5'-phosphate serves as cofactor. Found at highest levels in nodules, confined to the infected cells.

The protein resides in the mitochondrion. It carries out the reaction N(2)-acetyl-L-ornithine + 2-oxoglutarate = N-acetyl-L-glutamate 5-semialdehyde + L-glutamate. It functions in the pathway amino-acid biosynthesis; L-arginine biosynthesis; N(2)-acetyl-L-ornithine from L-glutamate: step 4/4. Its function is as follows. Involved in the biosynthesis of citrulline. This is Acetylornithine aminotransferase, mitochondrial (AG118) from Alnus glutinosa (European alder).